The sequence spans 243 residues: tRNA1(Val) (adenine(37)-N6)-methyltransferase (243 aa).

Belongs to the methyltransferase superfamily. tRNA (adenine-N(6)-)-methyltransferase family.

It is found in the cytoplasm. The enzyme catalyses adenosine(37) in tRNA1(Val) + S-adenosyl-L-methionine = N(6)-methyladenosine(37) in tRNA1(Val) + S-adenosyl-L-homocysteine + H(+). Functionally, specifically methylates the adenine in position 37 of tRNA(1)(Val) (anticodon cmo5UAC). This Shewanella loihica (strain ATCC BAA-1088 / PV-4) protein is tRNA1(Val) (adenine(37)-N6)-methyltransferase.